The chain runs to 383 residues: Pentatricopeptide repeat-containing protein 2, mitochondrial (383 aa).

The PPR repeat unit spans residues 161-195 (TSFNILMDMLFIKGKYKSALEVLIEMKNQNVKFTT). S377 is subject to Phosphoserine.

It belongs to the PTCD2 family.

Its subcellular location is the mitochondrion. Involved in mitochondrial RNA maturation and mitochondrial respiratory chain function. The polypeptide is Pentatricopeptide repeat-containing protein 2, mitochondrial (PTCD2) (Pongo abelii (Sumatran orangutan)).